A 455-amino-acid polypeptide reads, in one-letter code: Histone chaperone RTT106 (455 aa).

An N-acetylserine modification is found at Ser2. Residues 2-67 (SKLFLDELPE…SSDLLKTDEI (66 aa)) are dimeric region. PH domains lie at 68–200 (SETN…GFKI) and 217–301 (INSF…VKRK). A double PH domain region spans residues 68–301 (SETNTIFKLE…AKIDDYVKRK (234 aa)). The segment covering 305–314 (DKSMSEELKA) has biased composition (basic and acidic residues). Positions 305–455 (DKSMSEELKA…DEDGSGVEYD (151 aa)) are disordered. The span at 319-339 (KGQATDGTADQPSILQEATRQ) shows a compositional bias: polar residues. 2 stretches are compositionally biased toward acidic residues: residues 350 to 366 (SDDD…ESDL) and 376 to 395 (DGAE…DEEE). Residues 402 to 418 (ALNRDNSFASINGQPEQ) show a composition bias toward polar residues. A phosphoserine mark is found at Ser408 and Ser411. Positions 420 to 429 (LQYKEFKEPL) are enriched in basic and acidic residues. The span at 430–455 (ELEDIPIEIDNDDDEDDEDGSGVEYD) shows a compositional bias: acidic residues. At Ser450 the chain carries Phosphoserine.

It belongs to the RTT106 family. In terms of assembly, homodimers (via the N-terminal domain). Interacts with the SWI/SNF complex. Interacts with the RSC complex. Interacts with the HIR complex. Interacts with the CAF-1 complex. Interacts with RLF2. Interacts with SIR4. Interacts with YTA7. Interacts with CAC2. Interacts with HPC2. Interacts with HIR2. Interacts with MSI1. Interacts with HIR1. Interacts with histone H3. Interacts with histone H4.

The protein resides in the nucleus. Its subcellular location is the chromosome. Functionally, histones H3 and H4 chaperone involved in the nucleosome formation and heterochromatin silencing. Required for the deposition of H3K56ac-carrying H3-H4 complex onto newly-replicated DNA. Plays a role in the transcriptional regulation of the cell-cycle dependent histone genes by directly recruiting the SWI/SNF and RSC chromatin remodeling complexes to the histone genes in a cell cycle dependent manner. In cooperation with HIR and ASF1, creates a repressive structure at the core histone gene promoter and contributes to their repression outside of S phase. Involved in regulation of Ty1 transposition. This Saccharomyces cerevisiae (strain ATCC 204508 / S288c) (Baker's yeast) protein is Histone chaperone RTT106.